Consider the following 132-residue polypeptide: Small ribosomal subunit protein uS12 (132 aa).

Position 89 is a 3-methylthioaspartic acid (D89). Positions 102 to 132 (LDTSGVADRKQSRSKYGAKVPKAGAAPAKKK) are disordered. Residues 118–132 (GAKVPKAGAAPAKKK) are compositionally biased toward low complexity.

It belongs to the universal ribosomal protein uS12 family. As to quaternary structure, part of the 30S ribosomal subunit. Contacts proteins S8 and S17. May interact with IF1 in the 30S initiation complex.

Functionally, with S4 and S5 plays an important role in translational accuracy. Its function is as follows. Interacts with and stabilizes bases of the 16S rRNA that are involved in tRNA selection in the A site and with the mRNA backbone. Located at the interface of the 30S and 50S subunits, it traverses the body of the 30S subunit contacting proteins on the other side and probably holding the rRNA structure together. The combined cluster of proteins S8, S12 and S17 appears to hold together the shoulder and platform of the 30S subunit. This chain is Small ribosomal subunit protein uS12, found in Chlorobaculum tepidum (strain ATCC 49652 / DSM 12025 / NBRC 103806 / TLS) (Chlorobium tepidum).